The following is a 512-amino-acid chain: Inosine-5'-monophosphate dehydrogenase (512 aa).

CBS domains follow at residues 110–169 and 173–231; these read FIMK…SAPV and MTRR…PNSS. Residues 268 to 270 and 318 to 320 each bind NAD(+); these read DSS and GMG. K(+)-binding residues include glycine 320 and glycine 322. Serine 323 contacts IMP. Cysteine 325 serves as a coordination point for K(+). Cysteine 325 acts as the Thioimidate intermediate in catalysis. IMP contacts are provided by residues 358 to 360, 381 to 382, and 405 to 409; these read DGG, GS, and YRGMG. Arginine 423 serves as the catalytic Proton acceptor. Glutamine 435 lines the IMP pocket. Glutamate 494 and glycine 495 together coordinate K(+). A Microbody targeting signal motif is present at residues 510-512; that stretch reads SKL.

This sequence belongs to the IMPDH/GMPR family. Homotetramer. The cofactor is K(+).

It is found in the glycosome. It carries out the reaction IMP + NAD(+) + H2O = XMP + NADH + H(+). It functions in the pathway purine metabolism; XMP biosynthesis via de novo pathway; XMP from IMP: step 1/1. Its activity is regulated as follows. Mycophenolic acid (MPA) is a non-competitive inhibitor that prevents formation of the closed enzyme conformation by binding to the same site as the amobile flap. In contrast, mizoribine monophosphate (MZP) is a competitive inhibitor that induces the closed conformation. MPA is a potent inhibitor of mammalian IMPDHs but a poor inhibitor of the bacterial enzymes. MZP is a more potent inhibitor of bacterial IMPDH. Functionally, catalyzes the conversion of inosine 5'-phosphate (IMP) to xanthosine 5'-phosphate (XMP), the first committed and rate-limiting step in the de novo synthesis of guanine nucleotides, and therefore plays an important role in the regulation of cell growth. This is Inosine-5'-monophosphate dehydrogenase from Trypanosoma brucei brucei.